Reading from the N-terminus, the 485-residue chain is MRPTLALSALLLLQLLLLSTPSLSQDNGNKTDTSDITSIDQNQDKPATNQPSNATPKSSVQPPTPTSISTSSPDPKATQSSNSSVTTTSDSTTDRTSSSTSTVPTTSNSGQTVSSGGKSSDKITTALPTTLGPVNASSQPTDLNTSTKLPSTPTTNSTASPHQPVSHSEGQHTTVQSSSASVSSSDNTTLLWILTTSKPTGTSEGTQPIAISTPGITTPVSTPLQPTGSPGGTESVPTTEEFTHSTSSWTPVVSQGPSTPSSTWTSGSYKLKCDPAIKPHEELLILNLTRDSFCKGSPPNERFLELLCHSAKASFKPAEDSCALELAPILDNQAVAVKRIVIETKLSPKAVFELLKDKWDDLTEAGVIDIHLGKEGPPEVNEDRFSLPLIITIVCMASFLLLVAALYGCCHQRISQRKDQQRLTEELQTVENGYHDNPTLEVMETPSEMQEKKVVNLNGELGDSWIVPLDNLTKEDLDEEEDTHL.

The signal sequence occupies residues 1 to 24 (MRPTLALSALLLLQLLLLSTPSLS). A disordered region spans residues 22–267 (SLSQDNGNKT…STPSSTWTSG (246 aa)). Residues 25-386 (QDNGNKTDTS…PPEVNEDRFS (362 aa)) lie on the Extracellular side of the membrane. Positions 26-57 (DNGNKTDTSDITSIDQNQDKPATNQPSNATPK) are enriched in polar residues. 2 N-linked (GlcNAc...) asparagine glycosylation sites follow: Asn29 and Asn82. Low complexity predominate over residues 58–109 (SSVQPPTPTSISTSSPDPKATQSSNSSVTTTSDSTTDRTSSSTSTVPTTSNS). Composition is skewed to polar residues over residues 110-128 (GQTV…TALP) and 135-149 (NASS…STKL). N-linked (GlcNAc...) asparagine glycosylation is found at Asn135, Asn144, and Asn156. Positions 150-161 (PSTPTTNSTASP) are enriched in low complexity. 3 stretches are compositionally biased toward polar residues: residues 163 to 176 (QPVS…TTVQ), 186 to 228 (DNTT…QPTG), and 235 to 253 (SVPT…TPVV). A glycan (N-linked (GlcNAc...) asparagine) is linked at Asn187. The span at 254-267 (SQGPSTPSSTWTSG) shows a compositional bias: low complexity. Asn287 is a glycosylation site (N-linked (GlcNAc...) asparagine). The chain crosses the membrane as a helical span at residues 387-407 (LPLIITIVCMASFLLLVAALY). Over 408 to 485 (GCCHQRISQR…DLDEEEDTHL (78 aa)) the chain is Cytoplasmic. Thr445 bears the Phosphothreonine mark. Ser464 is modified (phosphoserine). Position 483 is a phosphothreonine (Thr483).

This sequence belongs to the podocalyxin family. In terms of assembly, monomer; when associated with the membrane raft. Oligomer; when integrated in the apical membrane. Interacts with NHERF2. Interacts (via the C-terminal PDZ-binding motif DTHL) with NHERF1 (via the PDZ domains); the interaction take place early in the secretory pathway and is necessary for its apical membrane sorting. Found in a complex with EZR, PODXL and NHERF2. Associates with the actin cytoskeleton through complex formation with EZR and NHERF2. Interacts (via the C-terminal PDZ-binding motif DTHL) with NHERF1 (via the PDZ domains); interaction is not detected in glomerular epithelium cells. Interacts (via the C-terminal PDZ-binding motif DTHL) with NHERF2 (via the PDZ 1 domain); interaction is detected in glomerular epithelium cells. Interacts with EZR. In terms of processing, N- and O-linked glycosylated. Sialoglycoprotein. As to expression, glomerular epithelium cell (podocyte) (at protein level).

Its subcellular location is the apical cell membrane. It is found in the cell projection. The protein localises to the microvillus. It localises to the membrane raft. The protein resides in the lamellipodium. Its subcellular location is the filopodium. It is found in the ruffle. The protein localises to the membrane. Involved in the regulation of both adhesion and cell morphology and cancer progression. Functions as an anti-adhesive molecule that maintains an open filtration pathway between neighboring foot processes in the podocyte by charge repulsion. Acts as a pro-adhesive molecule, enhancing the adherence of cells to immobilized ligands, increasing the rate of migration and cell-cell contacts in an integrin-dependent manner. Induces the formation of apical actin-dependent microvilli. Involved in the formation of a preapical plasma membrane subdomain to set up initial epithelial polarization and the apical lumen formation during renal tubulogenesis. Plays a role in cancer development and aggressiveness by inducing cell migration and invasion through its interaction with the actin-binding protein EZR. Affects EZR-dependent signaling events, leading to increased activities of the MAPK and PI3K pathways in cancer cells. The sequence is that of Podocalyxin (Podxl) from Rattus norvegicus (Rat).